Consider the following 215-residue polypeptide: Cytochrome b6 (215 aa).

The chain crosses the membrane as a helical span at residues 32–52 (IFYCLGGITLTCFLVQVATGF). Residue C35 coordinates heme c. Heme b is bound by residues H86 and H100. The next 3 membrane-spanning stretches (helical) occupy residues 90–110 (ASMMVLMMILHVFRVYLTGGF), 116–136 (LTWVTGVVLGVLTASFGVTGY), and 186–206 (LHTFVLPLLTAVFMLMHFLMI). 2 residues coordinate heme b: H187 and H202.

Belongs to the cytochrome b family. PetB subfamily. In terms of assembly, the 4 large subunits of the cytochrome b6-f complex are cytochrome b6, subunit IV (17 kDa polypeptide, PetD), cytochrome f and the Rieske protein, while the 4 small subunits are PetG, PetL, PetM and PetN. The complex functions as a dimer. It depends on heme b as a cofactor. Heme c is required as a cofactor.

It is found in the plastid. It localises to the chloroplast thylakoid membrane. Functionally, component of the cytochrome b6-f complex, which mediates electron transfer between photosystem II (PSII) and photosystem I (PSI), cyclic electron flow around PSI, and state transitions. This Gossypium barbadense (Sea Island cotton) protein is Cytochrome b6.